We begin with the raw amino-acid sequence, 163 residues long: Putative 4-hydroxy-4-methyl-2-oxoglutarate aldolase (163 aa).

Residues 79–82 (GDQL) and arginine 101 each bind substrate. Aspartate 102 serves as a coordination point for a divalent metal cation.

The protein belongs to the class II aldolase/RraA-like family. Homotrimer. A divalent metal cation serves as cofactor.

It catalyses the reaction 4-hydroxy-4-methyl-2-oxoglutarate = 2 pyruvate. The enzyme catalyses oxaloacetate + H(+) = pyruvate + CO2. Its function is as follows. Catalyzes the aldol cleavage of 4-hydroxy-4-methyl-2-oxoglutarate (HMG) into 2 molecules of pyruvate. Also contains a secondary oxaloacetate (OAA) decarboxylase activity due to the common pyruvate enolate transition state formed following C-C bond cleavage in the retro-aldol and decarboxylation reactions. The polypeptide is Putative 4-hydroxy-4-methyl-2-oxoglutarate aldolase (Dechloromonas aromatica (strain RCB)).